A 1208-amino-acid chain; its full sequence is Urease accessory protein 2 (1208 aa).

Coiled coils occupy residues 187–362 (RDKI…EKAA) and 400–469 (IKAL…MHEQ). One can recognise an SMC hinge domain in the interval 523–633 (DGVFGPLYDL…ICEDLQTAAH (111 aa)). Coiled coils occupy residues 688–771 (HIEV…YEEE) and 817–903 (NRLE…VQTQ). Residues 748 to 773 (ESSLEEAEGASRDAKAKRASYEEELR) are disordered. A compositionally biased stretch (basic and acidic residues) spans 756–773 (GASRDAKAKRASYEEELR).

This sequence belongs to the SMC family. SMC3 subfamily. Component of cohesin complexes.

It localises to the nucleus. Its function is as follows. Central component of cohesin, a complex required for chromosome cohesion during the cell cycle. The cohesin complex may form a large proteinaceous ring within which sister chromatids can be trapped. At anaphase, the complex is cleaved and dissociates from chromatin, allowing sister chromatids to segregate. Cohesion is coupled to DNA replication and is involved in DNA repair. The cohesin complex also plays an important role in spindle pole assembly during mitosis and in chromosomes movement. Is unrelated to urease function in C.neoformans. The polypeptide is Urease accessory protein 2 (Cryptococcus neoformans var. grubii serotype A (strain H99 / ATCC 208821 / CBS 10515 / FGSC 9487) (Filobasidiella neoformans var. grubii)).